A 119-amino-acid chain; its full sequence is NAD(P)H-quinone oxidoreductase subunit M (119 aa).

This sequence belongs to the complex I NdhM subunit family. In terms of assembly, NDH-1 can be composed of about 15 different subunits; different subcomplexes with different compositions have been identified which probably have different functions.

It is found in the cellular thylakoid membrane. It carries out the reaction a plastoquinone + NADH + (n+1) H(+)(in) = a plastoquinol + NAD(+) + n H(+)(out). It catalyses the reaction a plastoquinone + NADPH + (n+1) H(+)(in) = a plastoquinol + NADP(+) + n H(+)(out). In terms of biological role, NDH-1 shuttles electrons from an unknown electron donor, via FMN and iron-sulfur (Fe-S) centers, to quinones in the respiratory and/or the photosynthetic chain. The immediate electron acceptor for the enzyme in this species is believed to be plastoquinone. Couples the redox reaction to proton translocation, and thus conserves the redox energy in a proton gradient. Cyanobacterial NDH-1 also plays a role in inorganic carbon-concentration. The sequence is that of NAD(P)H-quinone oxidoreductase subunit M from Crocosphaera subtropica (strain ATCC 51142 / BH68) (Cyanothece sp. (strain ATCC 51142)).